The sequence spans 390 residues: tRNA-specific 2-thiouridylase MnmA (390 aa).

ATP-binding positions include 33–40 (AMSGGVDS) and M59. The Nucleophile role is filled by C131. A disulfide bond links C131 and C230. ATP is bound at residue G155. The tract at residues 180 to 182 (KDQ) is interaction with tRNA. C230 functions as the Cysteine persulfide intermediate in the catalytic mechanism.

The protein belongs to the MnmA/TRMU family.

The protein localises to the cytoplasm. It carries out the reaction S-sulfanyl-L-cysteinyl-[protein] + uridine(34) in tRNA + AH2 + ATP = 2-thiouridine(34) in tRNA + L-cysteinyl-[protein] + A + AMP + diphosphate + H(+). Its function is as follows. Catalyzes the 2-thiolation of uridine at the wobble position (U34) of tRNA, leading to the formation of s(2)U34. This Symbiobacterium thermophilum (strain DSM 24528 / JCM 14929 / IAM 14863 / T) protein is tRNA-specific 2-thiouridylase MnmA.